A 163-amino-acid chain; its full sequence is Nucleotide-binding protein Dde_2479 (163 aa).

It belongs to the YajQ family.

In terms of biological role, nucleotide-binding protein. This Oleidesulfovibrio alaskensis (strain ATCC BAA-1058 / DSM 17464 / G20) (Desulfovibrio alaskensis) protein is Nucleotide-binding protein Dde_2479.